The primary structure comprises 1320 residues: Sister chromatid cohesion protein PDS5 homolog A (1320 aa).

HEAT repeat units lie at residues 156–195 (NEIF…EGDG), 272–310 (PLLL…AKDS), 388–426 (NLVN…KYCL), 709–747 (PQIR…NKEV), and 990–1028 (SLLP…CLWF). The segment covering 1158–1179 (TFTSETGSNASTNSQPSSPATN) has biased composition (polar residues). The segment at 1158–1320 (TFTSETGSNA…APQRQIDLQR (163 aa)) is disordered. A compositionally biased stretch (basic and acidic residues) spans 1180 to 1194 (KSRDVSSEVGARENE). Positions 1225 to 1241 (GTENSVSSNPSAGSQPP) are enriched in polar residues. A compositionally biased stretch (low complexity) spans 1255–1267 (AGAATQEKEAGAT). Residues 1283 to 1293 (QDPSSTASTDA) are compositionally biased toward polar residues. Over residues 1294 to 1309 (LSDKTPKQQKEAEPKR) the composition is skewed to basic and acidic residues.

It belongs to the PDS5 family. Interacts with the cohesin complex. Binds chromatin in a cohesin-dependent manner.

Its subcellular location is the nucleus. May regulate sister chromatid cohesion during mitosis and couple it to DNA replication. This chain is Sister chromatid cohesion protein PDS5 homolog A, found in Danio rerio (Zebrafish).